A 34-amino-acid chain; its full sequence is Omega/M-ectatotoxin-Et1a subunit B (34 aa).

The cysteines at positions 10 and 32 are disulfide-linked.

The protein belongs to the ectatomin family. Ectatomin-Et subfamily. Heterodimer of an A and a B chain; disulfide-linked. In terms of tissue distribution, expressed by the venom gland.

The protein localises to the secreted. It is found in the target cell membrane. In terms of biological role, algogenic for animals, human and insects. At high concentrations (0.5-1 uM), it acts as a pore-forming protein that forms nonselective cation channels both in cell and artificial membranes. It is weakly selective for cation over anions channel conductance is identical in both directions. At lower concentrations (1-10 nM), this heterodimer inhibits cardiac L-type calcium currents in isolated rat cardiac ventricular myocytes. The chain is Omega/M-ectatotoxin-Et1a subunit B from Ectatomma tuberculatum (Selva ant).